The primary structure comprises 709 residues: Polyribonucleotide nucleotidyltransferase (709 aa).

Asp-489 and Asp-495 together coordinate Mg(2+). The KH domain occupies Pro-556–Ile-615. The S1 motif domain maps to Gly-625–Lys-693.

Belongs to the polyribonucleotide nucleotidyltransferase family. Requires Mg(2+) as cofactor.

It localises to the cytoplasm. It catalyses the reaction RNA(n+1) + phosphate = RNA(n) + a ribonucleoside 5'-diphosphate. Functionally, involved in mRNA degradation. Catalyzes the phosphorolysis of single-stranded polyribonucleotides processively in the 3'- to 5'-direction. The polypeptide is Polyribonucleotide nucleotidyltransferase (Streptococcus agalactiae serotype III (strain NEM316)).